The following is a 359-amino-acid chain: Histidinol-phosphate aminotransferase (359 aa).

Lys-217 is subject to N6-(pyridoxal phosphate)lysine.

Belongs to the class-II pyridoxal-phosphate-dependent aminotransferase family. Histidinol-phosphate aminotransferase subfamily. As to quaternary structure, homodimer. Requires pyridoxal 5'-phosphate as cofactor.

The enzyme catalyses L-histidinol phosphate + 2-oxoglutarate = 3-(imidazol-4-yl)-2-oxopropyl phosphate + L-glutamate. It participates in amino-acid biosynthesis; L-histidine biosynthesis; L-histidine from 5-phospho-alpha-D-ribose 1-diphosphate: step 7/9. This Salmonella choleraesuis (strain SC-B67) protein is Histidinol-phosphate aminotransferase.